We begin with the raw amino-acid sequence, 318 residues long: L-lactate dehydrogenase (318 aa).

Positions 16, 37, and 69 each coordinate NAD(+). Substrate contacts are provided by residues Q86, R92, and 124–127; that span reads NPVD. NAD(+) is bound by residues 122–124 and S147; that span reads ASN. Substrate is bound at residue 152-155; it reads DSAR. H179 (proton acceptor) is an active-site residue. Y223 carries the post-translational modification Phosphotyrosine. Residue T232 coordinates substrate.

The protein belongs to the LDH/MDH superfamily. LDH family. In terms of assembly, homotetramer.

It localises to the cytoplasm. The catalysed reaction is (S)-lactate + NAD(+) = pyruvate + NADH + H(+). It functions in the pathway fermentation; pyruvate fermentation to lactate; (S)-lactate from pyruvate: step 1/1. Its function is as follows. Catalyzes the conversion of lactate to pyruvate. The chain is L-lactate dehydrogenase from Mycoplasma mycoides subsp. mycoides SC (strain CCUG 32753 / NCTC 10114 / PG1).